Reading from the N-terminus, the 169-residue chain is UPF0398 protein Spy49_1277c (169 aa).

This sequence belongs to the UPF0398 family.

The polypeptide is UPF0398 protein Spy49_1277c (Streptococcus pyogenes serotype M49 (strain NZ131)).